A 341-amino-acid chain; its full sequence is Flap endonuclease 1 (341 aa).

Positions 1–98 (MGVQIGELIP…RELEKRREAR (98 aa)) are N-domain. 7 residues coordinate Mg(2+): aspartate 27, aspartate 80, glutamate 152, glutamate 154, aspartate 173, aspartate 175, and aspartate 236. An I-domain region spans residues 116–258 (EAKKYAMRAT…KALTIVKRTK (143 aa)). An interaction with PCNA region spans residues 330 to 338 (KQSTLESWF).

This sequence belongs to the XPG/RAD2 endonuclease family. FEN1 subfamily. Interacts with PCNA. PCNA stimulates the nuclease activity without altering cleavage specificity. Mg(2+) is required as a cofactor.

In terms of biological role, structure-specific nuclease with 5'-flap endonuclease and 5'-3' exonuclease activities involved in DNA replication and repair. During DNA replication, cleaves the 5'-overhanging flap structure that is generated by displacement synthesis when DNA polymerase encounters the 5'-end of a downstream Okazaki fragment. Binds the unpaired 3'-DNA end and kinks the DNA to facilitate 5' cleavage specificity. Cleaves one nucleotide into the double-stranded DNA from the junction in flap DNA, leaving a nick for ligation. Also involved in the base excision repair (BER) pathway. Acts as a genome stabilization factor that prevents flaps from equilibrating into structures that lead to duplications and deletions. Also possesses 5'-3' exonuclease activity on nicked or gapped double-stranded DNA. The protein is Flap endonuclease 1 of Thermococcus onnurineus (strain NA1).